The following is a 184-amino-acid chain: dCTP deaminase (184 aa).

Residues 107 to 112 (KSTYAR), 131 to 133 (TLE), Gln152, Tyr166, and Gln176 each bind dCTP. Residue Glu133 is the Proton donor/acceptor of the active site.

Belongs to the dCTP deaminase family. As to quaternary structure, homotrimer.

It catalyses the reaction dCTP + H2O + H(+) = dUTP + NH4(+). Its pathway is pyrimidine metabolism; dUMP biosynthesis; dUMP from dCTP (dUTP route): step 1/2. Functionally, catalyzes the deamination of dCTP to dUTP. In Paramagnetospirillum magneticum (strain ATCC 700264 / AMB-1) (Magnetospirillum magneticum), this protein is dCTP deaminase.